Reading from the N-terminus, the 440-residue chain is Chromosomal replication initiator protein DnaA (440 aa).

The domain I, interacts with DnaA modulators stretch occupies residues 1-75 (MNPNQILENL…QSGNKASVLI (75 aa)). The domain II stretch occupies residues 75–99 (IQAQSAKQSSKSTKIDIAHIKAQST). The domain III, AAA+ region stretch occupies residues 100–316 (ILNPSFTFES…GIIISLNAYA (217 aa)). ATP-binding residues include Gly-146, Gly-148, Lys-149, and Thr-150. The domain IV, binds dsDNA stretch occupies residues 317-440 (TILGQEITLE…KNKILVKSQS (124 aa)).

The protein belongs to the DnaA family. In terms of assembly, oligomerizes as a right-handed, spiral filament on DNA at oriC.

It is found in the cytoplasm. Its function is as follows. Plays an essential role in the initiation and regulation of chromosomal replication. ATP-DnaA binds to the origin of replication (oriC) to initiate formation of the DNA replication initiation complex once per cell cycle. Binds the DnaA box (a 9 base pair repeat at the origin) and separates the double-stranded (ds)DNA. Forms a right-handed helical filament on oriC DNA; dsDNA binds to the exterior of the filament while single-stranded (ss)DNA is stabiized in the filament's interior. The ATP-DnaA-oriC complex binds and stabilizes one strand of the AT-rich DNA unwinding element (DUE), permitting loading of DNA polymerase. After initiation quickly degrades to an ADP-DnaA complex that is not apt for DNA replication. Binds acidic phospholipids. The polypeptide is Chromosomal replication initiator protein DnaA (Campylobacter jejuni subsp. jejuni serotype O:6 (strain 81116 / NCTC 11828)).